The following is a 328-amino-acid chain: Malate dehydrogenase (328 aa).

11–17 provides a ligand contact to NAD(+); that stretch reads GAAGQIG. Substrate contacts are provided by Arg94 and Arg100. NAD(+) is bound by residues Asn107, Gln114, and 131–133; that span reads VGN. Residues Asn133 and Arg164 each coordinate substrate. His189 serves as the catalytic Proton acceptor.

It belongs to the LDH/MDH superfamily. MDH type 2 family.

The enzyme catalyses (S)-malate + NAD(+) = oxaloacetate + NADH + H(+). Catalyzes the reversible oxidation of malate to oxaloacetate. The chain is Malate dehydrogenase from Xylella fastidiosa (strain Temecula1 / ATCC 700964).